The primary structure comprises 337 residues: Anthraniloyl-CoA anthraniloyltransferase (337 aa).

Anthraniloyl-CoA contacts are provided by Thr-29 and Phe-33. Residue Cys-113 is the Acyl-thioester intermediate of the active site. Anthraniloyl-CoA-binding positions include 154–155, 221–224, and His-258; these read RN and MRGR.

This sequence belongs to the thiolase-like superfamily. FabH family. In terms of assembly, homodimer.

It localises to the cytoplasm. The catalysed reaction is anthraniloyl-CoA + malonyl-CoA + H(+) = (2-aminobenzoyl)acetyl-CoA + CO2 + CoA. Its function is as follows. Required for the biosynthesis of a number of signaling molecules, such as the quinolone signal 2-heptyl-3-hydroxy-4(1H)-quinolone (PQS), 2-heptyl-4-hydroxyquinoline (HHQ) and 2,4-dihydroxyquinoline (DHQ). These molecules are required for normal biofilm formation. Catalyzes the transfer of the anthraniloyl moiety from anthraniloyl-CoA to malonyl-CoA to form 2-aminobenzoylacetyl-CoA. The first step of the reaction is the formation of a covalent anthraniloyl-PqsD intermediate. Next, the short-lived intermediate 3-(2-aminophenyl)-3-oxopropanoyl-CoA is formed. An intramolecular rearrangement of this intermediate can give rise to 2,4-dihydroxyquinoline (DHQ). This chain is Anthraniloyl-CoA anthraniloyltransferase (pqsD), found in Pseudomonas aeruginosa (strain ATCC 15692 / DSM 22644 / CIP 104116 / JCM 14847 / LMG 12228 / 1C / PRS 101 / PAO1).